A 561-amino-acid polypeptide reads, in one-letter code: uncharacterized protein (561 aa).

6 helical membrane passes run 10 to 29 (LLRN…GYWI), 34 to 56 (FGSL…SQIG), 63 to 80 (LKTV…FQSG), 95 to 117 (VLMA…RMFH), 122 to 144 (LAAG…SSAL), and 164 to 186 (GYAV…ILPW). RCK C-terminal domains are found at residues 205 to 287 (QGMA…LLGE) and 294 to 376 (HDMD…ELGS). 5 helical membrane-spanning segments follow: residues 386 to 403 (LVFH…GLIV), 407 to 429 (GSIP…FGWY), 442 to 464 (AAST…LQTG), 479 to 501 (FMLG…RYVL), and 538 to 560 (SFAI…VVAF).

The protein belongs to the AAE transporter (TC 2.A.81) family.

It localises to the cell membrane. This is an uncharacterized protein from Zymomonas mobilis subsp. mobilis (strain ATCC 31821 / ZM4 / CP4).